An 83-amino-acid chain; its full sequence is Small ribosomal subunit protein uS17 (83 aa).

Belongs to the universal ribosomal protein uS17 family. In terms of assembly, part of the 30S ribosomal subunit.

Its function is as follows. One of the primary rRNA binding proteins, it binds specifically to the 5'-end of 16S ribosomal RNA. This is Small ribosomal subunit protein uS17 from Chlamydia trachomatis serovar L2 (strain ATCC VR-902B / DSM 19102 / 434/Bu).